Reading from the N-terminus, the 2472-residue chain is Telomere-associated protein RIF1 (2472 aa).

The interval 1–25 (MTARGQSPLAPLLETLEDPSASHGG) is disordered. Residue S402 is modified to Phosphoserine. T409 carries the phosphothreonine modification. S782, S979, and S1008 each carry phosphoserine. T1047 is subject to Phosphothreonine. The interval 1145–1192 (LEKSSLSNNECGSLDKTSPEMSNSNNDERKKALISSRKTSTECASSTE) is disordered. Polar residues predominate over residues 1148-1169 (SSLSNNECGSLDKTSPEMSNSN). The residue at position 1162 (S1162) is a Phosphoserine. At T1220 the chain carries Phosphothreonine. S1236 and S1238 each carry phosphoserine. Basic and acidic residues-rich tracts occupy residues 1265–1279 (AKQR…DSEK) and 1306–1315 (MRSEPEKNTE). Disordered stretches follow at residues 1265–1318 (AKQR…EESV), 1398–1464 (MVNE…DVLP), and 1479–1587 (IEKG…DQEE). A compositionally biased stretch (polar residues) spans 1400–1412 (NEDSQVQITPNQK). Phosphoserine occurs at positions 1422, 1454, and 1513. 2 stretches are compositionally biased toward basic and acidic residues: residues 1431 to 1464 (SQDK…DVLP) and 1500 to 1530 (EQNK…EKLV). T1518 bears the Phosphothreonine mark. A phosphoserine mark is found at S1542, S1552, S1554, S1556, and S1564. Residues 1565-1574 (RKKRSGKWKN) are compositionally biased toward basic residues. Residues S1576, S1579, S1613, S1616, S1688, S1693, S1706, and S1709 each carry the phosphoserine modification. Residues 1762–1782 (TKKADVQAPVSPSETSQANPY) are disordered. Residues 1771–1782 (VSPSETSQANPY) are compositionally biased toward polar residues. T1806 is modified (phosphothreonine). S1810 bears the Phosphoserine mark. The segment covering 1846–1859 (AMSLESQESPNENF) has biased composition (polar residues). The segment at 1846 to 1889 (AMSLESQESPNENFKTVGPCLGDSKNVSQESLETKEEKPEETPK) is disordered. S1873 and S1876 each carry phosphoserine. Residues 1877 to 1889 (LETKEEKPEETPK) show a composition bias toward basic and acidic residues. Residues 1924-2472 (EASFHGQERT…WRSPSHENSI (549 aa)) are interaction with condensed chromosomes in telophase. 2 positions are modified to phosphoserine: S1926 and S1971. Positions 1992–2021 (EQTAAGELDGGNDVSDLHSSEETNTKMKNN) are disordered. The segment covering 2006 to 2021 (SDLHSSEETNTKMKNN) has biased composition (basic and acidic residues). A phosphoserine mark is found at S2144 and S2161. Position 2167 is a phosphothreonine (T2167). An interaction with ERCC6 region spans residues 2170-2446 (VWSPLASPST…SGSQLFEMHE (277 aa)). S2172, S2176, S2195, S2196, and S2205 each carry phosphoserine. Over residues 2227-2255 (RSHSSNSSPIGKSVKTSPTTQSKHNTTSA) the composition is skewed to polar residues. The segment at 2227-2269 (RSHSSNSSPIGKSVKTSPTTQSKHNTTSAKGFLSPGSRSPKFK) is disordered. Phosphoserine is present on residues S2260, S2339, S2391, S2393, S2465, and S2471.

Belongs to the RIF1 family. As to quaternary structure, interacts with TP53BP1 (when phosphorylated by ATM). May interact with TRF2. Interacts with SHLD2. Interacts with ERCC6 (via WHD region). Interacts with ASTE1. In terms of tissue distribution, highly expressed in testis.

It localises to the nucleus. The protein localises to the chromosome. Its subcellular location is the telomere. The protein resides in the cytoplasm. It is found in the cytoskeleton. It localises to the spindle. Functionally, key regulator of TP53BP1 that plays a key role in the repair of double-strand DNA breaks (DSBs) in response to DNA damage: acts by promoting non-homologous end joining (NHEJ)-mediated repair of DSBs. In response to DNA damage, interacts with ATM-phosphorylated TP53BP1. Interaction with TP53BP1 leads to dissociate the interaction between NUDT16L1/TIRR and TP53BP1, thereby unmasking the tandem Tudor-like domain of TP53BP1 and allowing recruitment to DNA DSBs. Once recruited to DSBs, RIF1 and TP53BP1 act by promoting NHEJ-mediated repair of DSBs. In the same time, RIF1 and TP53BP1 specifically counteract the function of BRCA1 by blocking DSBs resection via homologous recombination (HR) during G1 phase. Also required for immunoglobulin class-switch recombination (CSR) during antibody genesis, a process that involves the generation of DNA DSBs. Promotes NHEJ of dysfunctional telomeres. The protein is Telomere-associated protein RIF1 of Homo sapiens (Human).